Reading from the N-terminus, the 632-residue chain is Chaperone protein HtpG (632 aa).

The segment at 1 to 345 is a; substrate-binding; it reads MTTAAHAETL…SKDLSLNVSR (345 aa). Residues 346-561 form a b region; it reads ELLQKDPQVD…EHDMGYQMRR (216 aa). The c stretch occupies residues 562-632; it reads LMEAAGQPLP…VQRLNKLLSH (71 aa).

Belongs to the heat shock protein 90 family. Homodimer.

Its subcellular location is the cytoplasm. In terms of biological role, molecular chaperone. Has ATPase activity. This Chromohalobacter salexigens (strain ATCC BAA-138 / DSM 3043 / CIP 106854 / NCIMB 13768 / 1H11) protein is Chaperone protein HtpG.